A 225-amino-acid polypeptide reads, in one-letter code: Uracil-DNA glycosylase (225 aa).

Asp-65 serves as the catalytic Proton acceptor.

Belongs to the uracil-DNA glycosylase (UDG) superfamily. UNG family.

The protein resides in the cytoplasm. The catalysed reaction is Hydrolyzes single-stranded DNA or mismatched double-stranded DNA and polynucleotides, releasing free uracil.. Its function is as follows. Excises uracil residues from the DNA which can arise as a result of misincorporation of dUMP residues by DNA polymerase or due to deamination of cytosine. The chain is Uracil-DNA glycosylase from Lysinibacillus sphaericus (strain C3-41).